The sequence spans 813 residues: DNA gyrase subunit A (813 aa).

The Topo IIA-type catalytic domain maps to 38 to 504 (LPDVRDGLKP…EIEYLDVEDF (467 aa)). The O-(5'-phospho-DNA)-tyrosine intermediate role is filled by Y126. The short motif at 531–537 (QNRGGKG) is the GyrA-box element.

It belongs to the type II topoisomerase GyrA/ParC subunit family. Heterotetramer, composed of two GyrA and two GyrB chains. In the heterotetramer, GyrA contains the active site tyrosine that forms a transient covalent intermediate with DNA, while GyrB binds cofactors and catalyzes ATP hydrolysis.

The protein localises to the cytoplasm. The catalysed reaction is ATP-dependent breakage, passage and rejoining of double-stranded DNA.. In terms of biological role, a type II topoisomerase that negatively supercoils closed circular double-stranded (ds) DNA in an ATP-dependent manner to modulate DNA topology and maintain chromosomes in an underwound state. Negative supercoiling favors strand separation, and DNA replication, transcription, recombination and repair, all of which involve strand separation. Also able to catalyze the interconversion of other topological isomers of dsDNA rings, including catenanes and knotted rings. Type II topoisomerases break and join 2 DNA strands simultaneously in an ATP-dependent manner. The chain is DNA gyrase subunit A from Treponema pallidum (strain Nichols).